The following is a 698-amino-acid chain: Transcription factor cwo (698 aa).

Positions 62–75 (QDPLSHRIIEKRRR) are basic motif; degenerate. In terms of domain architecture, bHLH spans 62-117 (QDPLSHRIIEKRRRDRMNSCLADLSRLIPPQYQRKGRGRIEKTEIIEMAIRHLKHL). Residues 76-117 (DRMNSCLADLSRLIPPQYQRKGRGRIEKTEIIEMAIRHLKHL) are helix-loop-helix motif. In terms of domain architecture, Orange spans 128 to 159 (YRSGYMDCMKEAAKFLYDVHMQDFCHRLLGRL). Disordered stretches follow at residues 257–319 (SSPA…ASST) and 349–369 (STAPHHHHHHTDSSHHDFESS). Residues 280 to 318 (APPAADNVPSNSTGSGSAAACAGGNSNSSGSNSSNAASS) show a composition bias toward low complexity. Over residues 359–369 (TDSSHHDFESS) the composition is skewed to basic and acidic residues.

As to expression, expressed in adult brain where it is detected in the dorsal lateral neurons, small and large ventral lateral neurons and dorsal neurons 1, 2 and 3 (at protein level). Expressed at constant levels in a 12 hour light / 12 hour day cycle (at protein level). Strongly expressed in pacemaker neurons. In adults, mRNA expression oscillates in a circadian manner with a peak at around 14 hour Zeitgeber time. mRNA levels oscillate in a rhythmic manner in both 12 hour light / 12 hour dark and constant dark conditions with a morning peak around the time of lights-on and an evening peak around the time of lights-off in light/dark conditions. During stage 8 of embryonic development, expressed in the anterior and posterior midgut primordia and expression in the gut continues throughout embryonic development. During germ band retraction, expression is initiated in many tissues in a prominent segmentally repeated pattern. Later, expression is ubiquitous but has higher levels in segmentally repeated clusters of cells. Expression is also found in cells of the amnioserosa, in the head region, in posterior spiracles and in tracheal trees.

Its subcellular location is the nucleus. Its function is as follows. Plays a role in the regulation of circadian rhythms. Transcriptional repressor which inhibits Clock-mediated transcriptional activation by binding to E boxes in the promoters of Clock target genes and repressing their transcription. E box binding activity is time-dependent with higher binding activity seen in the early morning (zeitgeber time 2) than early evening (zeitgeber time 14) and is dependent on the presence of the circadian protein per. It is likely that per binds to Clock-cycle heterodimers, reducing their affinity for E box binding and allowing cwo to bind instead. Negatively regulates its own expression. The sequence is that of Transcription factor cwo from Drosophila melanogaster (Fruit fly).